The primary structure comprises 305 residues: Oxidoreductase swnR (305 aa).

Belongs to the NmrA-type oxidoreductase family. Isoflavone reductase subfamily.

The enzyme catalyses L-pipecolate + O2 = L-1-piperideine-6-carboxylate + H2O2 + H(+). Its pathway is mycotoxin biosynthesis. Functionally, oxidoreductase; part of the gene cluster that mediates the biosynthesis of swainsonine (SW), a cytotoxic fungal alkaloid and a potential cancer therapy drug. Swainsonine production occurs via a multibranched pathway and is dispensable for fungal colonization of plants and infection of insect hosts. The first step of swainsonine biosynthesis is the production of the precursor pipecolic acid (PA) via conversion of L-lysine (Lys) to 1-piperideine-6-carboxylate (P6C) by the aminotransferase swnA, the latter being further reduced to PA by the reductase swnR. PA can be converted from lysine by both the SW biosynthetic cluster and the unclustered genes such as lysine cyclodeaminase. The PKS-NRPS hybrid synthetase swnK uptakes and condensates PA and malonyl-CoA with and without skipping of the ketoreductase (KR) domain in order to produce 3 intermediates, 1-oxoindolizidine, (1S)-1-hydroxyindolizin, and (1R)-1-hydroxyindolizine; with the transisomer (1S)-1-hydroxyindolizin being predominant. The terminal thioester reductase (TE) domain of swnK is involved in reduction of the thioester bond to release the intermediate aldehydes. The oxidoreductase swnN could contribute to the reduction of 1-oxoindolizidine to (1S)-1-hydroxyindolizin and (1R)-1-hydroxyindolizine, contributing to the major route of SW production. The dioxygenase swnH2 would be responsible for the oxidization of (1R)-1-hydroxyindolizine into (1R,2S)-1,2-dihydroxyindolizine and of (1S)-1-hydroxyindolizin to yield both (1R,2S)-1,2-dihydroxyindolizine and (1S,2S)-1,2-dihydroxyindolizine. The dioxygenase swnH1 then performs the conversion of the 1,2-dihydroxyindolizine epimers to SW. The polypeptide is Oxidoreductase swnR (Metarhizium robertsii (strain ARSEF 23 / ATCC MYA-3075) (Metarhizium anisopliae (strain ARSEF 23))).